Here is a 391-residue protein sequence, read N- to C-terminus: Secreted aspartic protease 1 (391 aa).

The first 18 residues, 1–18, serve as a signal peptide directing secretion; the sequence is MFLKNIFIALAIALLVDA. Residues 19–50 constitute a propeptide, activation peptide; that stretch reads SPAKRSPGFVTLDFDVIKTPVNATGQEGKVKR. An N-linked (GlcNAc...) asparagine glycan is attached at Asn40. The region spanning 64 to 377 is the Peptidase A1 domain; sequence YAADITIGSN…DLDDDKISLA (314 aa). The active site involves Asp82. 82–84 is a binding site for pepstatin A; that stretch reads DTG. A disulfide bridge links Cys97 with Cys109. Residue 135–136 participates in pepstatin A binding; sequence GD. Positions 241 and 263 each coordinate Zn(2+). Residue Asp267 is part of the active site. Pepstatin A is bound at residue 267 to 271; that stretch reads DSGTT. The cysteines at positions 305 and 343 are disulfide-linked.

This sequence belongs to the peptidase A1 family. Monomer.

The protein resides in the secreted. The catalysed reaction is Preferential cleavage at the carboxyl of hydrophobic amino acids, but fails to cleave 15-Leu-|-Tyr-16, 16-Tyr-|-Leu-17 and 24-Phe-|-Phe-25 of insulin B chain. Activates trypsinogen, and degrades keratin.. With respect to regulation, inhibited by pepstatin A analogs and squash aspartic peptidase inhibitor (SQAPI). Its function is as follows. Secreted aspartic peptidases (SAPs) are a group of ten acidic hydrolases considered as key virulence factors. These enzymes supply the fungus with nutrient amino acids as well as are able to degrade the selected host's proteins involved in the immune defense. Induces host inflammatory cytokine production in a proteolytic activity-independent way. Plays a role in tissue damage during superficial infection. Moreover, acts toward human hemoglobin though limited proteolysis to generate a variety of antimicrobial hemocidins, enabling to compete with the other microorganisms of the same physiological niche using the microbicidal peptides generated from the host protein. In terms of biological role, plays a key role in defense against host by cleaving histatin-5 (Hst 5), a peptide from human saliva that carries out fungicidal activity. The cleavage rate decreases in an order of SAP2 &gt; SAP9 &gt; SAP3 &gt; SAP7 &gt; SAP4 &gt; SAP1 &gt; SAP8. The first cleavage occurs between residues 'Lys-17' and 'His-18' of Hst 5, giving DSHAKRHHGYKRKFHEK and HHSHRGY peptides. Further fragmentation by SAP1 results in AKRHHGYKRKFHEK and AKRHHGY products. The sequence is that of Secreted aspartic protease 1 from Candida albicans (strain SC5314 / ATCC MYA-2876) (Yeast).